The following is a 299-amino-acid chain: Centriolar and ciliogenesis-associated protein HYLS1 (299 aa).

S179 is subject to Phosphoserine.

Belongs to the HYLS1 family.

It localises to the cytoplasm. The protein localises to the cell projection. Its subcellular location is the cilium. It is found in the cytoskeleton. The protein resides in the microtubule organizing center. It localises to the centrosome. The protein localises to the centriole. Functionally, plays a role in ciliogenesis. The sequence is that of Centriolar and ciliogenesis-associated protein HYLS1 from Homo sapiens (Human).